The following is a 159-amino-acid chain: Cytochrome c-type biogenesis protein CcmE (159 aa).

The Cytoplasmic portion of the chain corresponds to 1–8 (MNIRRKNR). The helical; Signal-anchor for type II membrane protein transmembrane segment at 9-29 (LWIACAVLAGLALTITLVLYA) threads the bilayer. Over 30–159 (LRSNIDLFYT…PESVYKDKAS (130 aa)) the chain is Periplasmic. Residues His130 and Tyr134 each coordinate heme. Positions 130 to 159 (HDENYTPPEVEKAMQENHRRPESVYKDKAS) are disordered.

It belongs to the CcmE/CycJ family.

It localises to the cell inner membrane. Heme chaperone required for the biogenesis of c-type cytochromes. Transiently binds heme delivered by CcmC and transfers the heme to apo-cytochromes in a process facilitated by CcmF and CcmH. This is Cytochrome c-type biogenesis protein CcmE from Citrobacter koseri (strain ATCC BAA-895 / CDC 4225-83 / SGSC4696).